The following is a 92-amino-acid chain: Evasin P675 (92 aa).

An N-terminal signal peptide occupies residues 1-24; sequence MEVKTFAFLQIAVIIALGLHLAPA. 3 disulfide bridges follow: Cys-44-Cys-63, Cys-48-Cys-65, and Cys-59-Cys-76. Asn-47 carries an N-linked (GlcNAc...) asparagine glycan. N-linked (GlcNAc...) asparagine glycosylation occurs at Asn-70.

The protein resides in the secreted. Its function is as follows. Salivary chemokine-binding protein which binds to host chemokines CXCL1, CXCL2, CXCL3, CXCL4, CXCL5, CXCL6, CXCL10, CXCL11 and CXCL13. This Ixodes ricinus (Common tick) protein is Evasin P675.